The primary structure comprises 150 residues: Protein Smg homolog (150 aa).

Belongs to the Smg family.

The protein is Protein Smg homolog of Leptothrix cholodnii (strain ATCC 51168 / LMG 8142 / SP-6) (Leptothrix discophora (strain SP-6)).